We begin with the raw amino-acid sequence, 132 residues long: Small ribosomal subunit protein uS9 (132 aa).

It belongs to the universal ribosomal protein uS9 family.

In Mesomycoplasma hyopneumoniae (strain 232) (Mycoplasma hyopneumoniae), this protein is Small ribosomal subunit protein uS9.